A 126-amino-acid polypeptide reads, in one-letter code: Major sperm protein 3 (126 aa).

N-acetylalanine is present on Ala2. An MSP domain is found at 8–125 (DIATMPAQKV…RRKNLPIEYN (118 aa)).

As to expression, sperm.

It localises to the cell projection. It is found in the pseudopodium. Its subcellular location is the cytoplasm. The protein resides in the cytoskeleton. Central component in molecular interactions underlying sperm crawling. Forms an extensive filament system that extends from sperm villipoda, along the leading edge of the pseudopod. The protein is Major sperm protein 3 (MSP-3) of Globodera rostochiensis (Golden nematode worm).